The sequence spans 184 residues: MFKAKVLVVGPTESGKTILANFISDATETIGGEYNPTQGVRILEFECPNGNKGSSCEVELWDCGGDSKFESCWPVIMKDSHGVIIVFSADIPSHLKEIEMWHLNFIQKQRLQENRCLLIAHKKPGSGDERERLNLSPALAKLTLIYSNLEDDPEDVRMELMKYLRGIVSSLSESRDREEMSIIT.

Residues 10–17 (GPTESGKT), 62–66 (DCGGD), and 122–125 (KKPG) contribute to the GTP site.

Belongs to the small GTPase superfamily. Rab family.

The protein is Intraflagellar transport protein 22 homolog (ift22) of Xenopus tropicalis (Western clawed frog).